We begin with the raw amino-acid sequence, 361 residues long: Free fatty acid receptor 4 (361 aa).

Over 1-45 the chain is Extracellular; that stretch reads MSPECARAAGDAPLRSLEQANRTRFSFFSDVKGDHRLLLAAVETT. The N-linked (GlcNAc...) asparagine glycan is linked to asparagine 21. Residues 46 to 66 form a helical membrane-spanning segment; it reads VLALIFAVSLLGNVCALVLVA. Residues 67–77 lie on the Cytoplasmic side of the membrane; that stretch reads RRRRRGTTACL. A helical transmembrane segment spans residues 78–98; that stretch reads VLNLFCADLLFISAIPLVLAV. At 99–112 the chain is on the extracellular side; the sequence is RWTEAWLLGPVACH. A disulfide bridge links cysteine 111 with cysteine 194. The chain crosses the membrane as a helical span at residues 113 to 133; the sequence is LLFYLMTLSGSVTILTLAAVS. Residues 134–156 are Cytoplasmic-facing; sequence LERMVCIVHLQRGVRGPGRRARA. A helical transmembrane segment spans residues 157–177; the sequence is VLLTLIWGYSAVAALPLCVFF. Residues 178–204 are Extracellular-facing; the sequence is RVVPQRLPGADQEISICTLIWPTIAGE. A helical transmembrane segment spans residues 205-225; it reads ISWDVSFVTLNFLVPGLVIVI. At 226–268 the chain is on the cytoplasmic side; sequence SYSKILQITKASRKRLTVSLAYSESHQIRVSQQDFRLFRTLFL. A helical transmembrane segment spans residues 269-289; the sequence is LMVSFFIMWSPIIITILLILI. Residues 290-295 are Extracellular-facing; sequence QNFKQD. Residues 296-316 form a helical membrane-spanning segment; the sequence is LVIWPSLFFWVVAFTFANSAL. The Cytoplasmic portion of the chain corresponds to 317–361; that stretch reads NPILYNMTLCRNEWKKIFCCFWFPEKGAILTDTSVKRNDLSVISG. Threonine 347 and threonine 349 each carry phosphothreonine. 3 positions are modified to phosphoserine: serine 350, serine 357, and serine 360.

This sequence belongs to the G-protein coupled receptor 1 family. In terms of assembly, interacts (via C-terminus) with ARRB2 following LCFAs stimulation. Post-translationally, phosphorylated at two clusters of Ser and Thr residues located in the intracellular C-terminus. Prerequisite for FFAR4 internalization via an ARRB2-dependent pathway. As to expression, highly expressed in lung and colon.

It localises to the cell membrane. The protein resides in the endosome membrane. The protein localises to the lysosome membrane. It is found in the cell projection. Its subcellular location is the cilium membrane. G-protein-coupled receptor for long-chain fatty acids (LCFAs) with a major role in adipogenesis, energy metabolism and inflammation. Signals via G-protein and beta-arrestin pathways. LCFAs sensing initiates activation of phosphoinositidase C-linked G proteins GNAQ and GNA11 (G(q)/G(11)), inducing a variety of cellular responses via second messenger pathways such as intracellular calcium mobilization, modulation of cyclic adenosine monophosphate (cAMP) production, and mitogen-activated protein kinases (MAPKs). After LCFAs binding, associates with beta-arrestin ARRB2 that acts as an adapter protein coupling the receptor to specific downstream signaling pathways, as well as mediating receptor endocytosis. In response to dietary fats, plays an important role in the regulation of adipocyte proliferation and differentiation. Acts as a receptor for omega-3 polyunsaturated fatty acids (PUFAs) at primary cilium of perivascular preadipocytes, initiating an adipogenic program via cAMP and CTCF-dependent chromatin remodeling that ultimately results in transcriptional activation of adipogenic genes and cell cycle entry. Induces differentiation of brown and beige adipocytes probably via autocrine and endocrine functions of FGF21 hormone. Contributes to the thermogenic activation of brown adipose tissue and the browning of white adipose tissue. Activates brown adipocytes by initiating intracellular calcium signaling leading to mitochondrial depolarization and fission, and overall increased mitochondrial respiration. Consequently stimulates fatty acid uptake and oxidation in mitochondria together with UCP1-mediated thermogenic respiration, eventually reducing fat mass. Regulates bi-potential differentiation of bone marrow mesenchymal stem cells toward osteoblasts or adipocytes likely by up-regulating distinct integrins. In response to dietary fats regulates hormone secretion and appetite. Stimulates GIP and GLP1 secretion from enteroendocrine cells as well as GCG secretion in pancreatic alpha cells, thereby playing a role in the regulation of blood glucose levels. Negatively regulates glucose-induced SST secretion in pancreatic delta cells. Mediates LCFAs inhibition of GHRL secretion, an appetite-controlling hormone. In taste buds, contributes to sensing of dietary fatty acids by the gustatory system. During the inflammatory response, promotes anti-inflammatory M2 macrophage differentiation in adipose tissue. Mediates the anti-inflammatory effects of omega-3 PUFAs via inhibition of NLRP3 inflammasome activation. In this pathway, interacts with adapter protein ARRB2 and inhibits the priming step triggered by Toll-like receptors (TLRs) at the level of TAK1 and TAB1. Further inhibits the activation step when ARRB2 directly associates with NLRP3, leading to inhibition of pro-inflammatory cytokine release. Mediates LCFAs anti-apoptotic effects. The polypeptide is Free fatty acid receptor 4 (FFAR4) (Macaca fascicularis (Crab-eating macaque)).